A 208-amino-acid polypeptide reads, in one-letter code: RNA chaperone ProQ (208 aa).

Basic and acidic residues predominate over residues 106–127 (SKAKVATRRKEQAKKAREEAKA). The disordered stretch occupies residues 106–154 (SKAKVATRRKEQAKKAREEAKAKKTARAATPPKRRPQPAAKKVEQPVET).

Belongs to the ProQ family.

The protein localises to the cytoplasm. Functionally, RNA chaperone with significant RNA binding, RNA strand exchange and RNA duplexing activities. In Aliivibrio fischeri (strain ATCC 700601 / ES114) (Vibrio fischeri), this protein is RNA chaperone ProQ.